We begin with the raw amino-acid sequence, 2177 residues long: Mediator of RNA polymerase II transcription subunit 12 (2177 aa).

Positions 12–35 are disordered; it reads RPLKRPRLGPPDVYPQDPKQKEDE. Position 80 is an N6-acetyllysine (K80). At Y166 the chain carries Phosphotyrosine. 4 disordered regions span residues 323 to 344, 627 to 669, 690 to 717, and 1241 to 1266; these read QSTSTLPTTPAPQPPTSSTPST, GAPG…MDID, TMPCEGKGSPSPEKPDVEKEVKPPPKEK, and TVTGGTEELPEEEGGGGSGGRRQGGR. Residues S635, S665, S698, and S700 each carry the phosphoserine modification. The segment covering 702-717 has biased composition (basic and acidic residues); that stretch reads EKPDVEKEVKPPPKEK. 2 positions are modified to phosphoserine: S1258 and S1269. A compositionally biased stretch (low complexity) spans 1394 to 1411; sequence AETGSSSGSTASNMPSSS. Disordered stretches follow at residues 1394-1415, 1450-1474, and 1738-1829; these read AETGSSSGSTASNMPSSSKTKP, ELEKGQHLGSSSRKERDRQKQKSMS, and YLEP…PGSI. Composition is skewed to basic and acidic residues over residues 1450-1469 and 1758-1771; these read ELEKGQHLGSSSRKERDRQK and EPEKKAPEPPKTDK. The segment at 1616 to 2051 is interaction with CTNNB1 and GLI3; sequence LAKKLQKELG…VRSTAILPEQ (436 aa). Basic residues predominate over residues 1784–1793; it reads KKSTKGKKRS. Position 1798 is an N6-acetyllysine (K1798). An Asymmetric dimethylarginine; alternate modification is found at R1899. At R1899 the chain carries Omega-N-methylarginine; alternate. R1910 is modified (omega-N-methylarginine). 2 disordered regions span residues 1919 to 1938 and 1967 to 1989; these read QGMLGQSSVHQMTPSSSYGL and SYSSQPYQSTHPSTNPTLVDPTR. Polar residues predominate over residues 1927–1938; that stretch reads VHQMTPSSSYGL. Positions 1967–1980 are enriched in low complexity; that stretch reads SYSSQPYQSTHPST. 2 positions are modified to asymmetric dimethylarginine: R1994 and R2015. 3 stretches are compositionally biased toward low complexity: residues 2115 to 2125, 2133 to 2149, and 2158 to 2171; these read QHQQQQQQQAA, SQPQFQRQGLQQTQQQQ, and LQQQLSNTQPQPST. 2 disordered regions span residues 2115 to 2149 and 2158 to 2177; these read QHQQQQQQQAAPPQPQPQSQPQFQRQGLQQTQQQQ and LQQQLSNTQPQPSTNIFGRY.

The protein belongs to the Mediator complex subunit 12 family. As to quaternary structure, component of the Mediator complex, which is composed of MED1, MED4, MED6, MED7, MED8, MED9, MED10, MED11, MED12, MED13, MED13L, MED14, MED15, MED16, MED17, MED18, MED19, MED20, MED21, MED22, MED23, MED24, MED25, MED26, MED27, MED29, MED30, MED31, CCNC, CDK8 and CDC2L6/CDK11. The MED12, MED13, CCNC and CDK8 subunits form a distinct module termed the CDK8 module. Mediator containing the CDK8 module is less active than Mediator lacking this module in supporting transcriptional activation. Individual preparations of the Mediator complex lacking one or more distinct subunits have been variously termed ARC, CRSP, DRIP, PC2, SMCC and TRAP. Also interacts with CTNNB1 and GLI3. Ubiquitous.

The protein localises to the nucleus. Functionally, component of the Mediator complex, a coactivator involved in the regulated transcription of nearly all RNA polymerase II-dependent genes. Mediator functions as a bridge to convey information from gene-specific regulatory proteins to the basal RNA polymerase II transcription machinery. Mediator is recruited to promoters by direct interactions with regulatory proteins and serves as a scaffold for the assembly of a functional pre-initiation complex with RNA polymerase II and the general transcription factors. This subunit may specifically regulate transcription of targets of the Wnt signaling pathway and SHH signaling pathway. This Homo sapiens (Human) protein is Mediator of RNA polymerase II transcription subunit 12 (MED12).